Reading from the N-terminus, the 224-residue chain is Uracil-DNA glycosylase (224 aa).

Residue Asp62 is the Proton acceptor of the active site.

It belongs to the uracil-DNA glycosylase (UDG) superfamily. UNG family.

It localises to the cytoplasm. The catalysed reaction is Hydrolyzes single-stranded DNA or mismatched double-stranded DNA and polynucleotides, releasing free uracil.. Its function is as follows. Excises uracil residues from the DNA which can arise as a result of misincorporation of dUMP residues by DNA polymerase or due to deamination of cytosine. This Aliivibrio salmonicida (strain LFI1238) (Vibrio salmonicida (strain LFI1238)) protein is Uracil-DNA glycosylase.